Reading from the N-terminus, the 605-residue chain is Glutamine--fructose-6-phosphate aminotransferase [isomerizing] (605 aa).

Cys-2 functions as the Nucleophile; for GATase activity in the catalytic mechanism. The Glutamine amidotransferase type-2 domain occupies 2–220 (CGIVGVTGKD…DGEIVVVKPD (219 aa)). 2 consecutive SIS domains span residues 286 to 426 (LLTA…VDQP) and 458 to 595 (AKSA…VDKP). The active-site For Fru-6P isomerization activity is the Lys-600.

Homodimer.

The protein localises to the cytoplasm. It catalyses the reaction D-fructose 6-phosphate + L-glutamine = D-glucosamine 6-phosphate + L-glutamate. Functionally, catalyzes the first step in hexosamine metabolism, converting fructose-6P into glucosamine-6P using glutamine as a nitrogen source. In Lactiplantibacillus plantarum (strain ATCC BAA-793 / NCIMB 8826 / WCFS1) (Lactobacillus plantarum), this protein is Glutamine--fructose-6-phosphate aminotransferase [isomerizing].